A 207-amino-acid polypeptide reads, in one-letter code: Ras-related protein Rab-8A (207 aa).

Residues S17, G18, V19, G20, K21, T22, C23, S35, S39, and T40 each coordinate GTP. T22 is a Mg(2+) binding site. 2 consecutive short sequence motifs (switch) follow at residues 31-45 (DAFN…GIDF) and 63-80 (DTAG…YYRG). Residues T40 and D63 each contribute to the Mg(2+) site. Position 66 (G66) interacts with GTP. T72 is subject to Phosphothreonine. Residues N121, K122, D124, A152, and K153 each contribute to the GTP site. 2 positions are modified to phosphoserine: S181 and S185. C204 is subject to Cysteine methyl ester. The S-geranylgeranyl cysteine moiety is linked to residue C204. A propeptide spans 205-207 (VLL) (removed in mature form).

It belongs to the small GTPase superfamily. Rab family. As to quaternary structure, interacts (GTP-bound form) with MICALL1; regulates RAB8A association with recycling endosomes. Interacts with MICALL2; competes with RAB13 and is involved in E-cadherin endocytic recycling. Interacts (GTP-bound form) with MICAL1, MICALCL, MICAL3, EHBP1 and EHBP1L1; at least in case of MICAL1, MICALCL, MICAL3 and EHBP1L1 two molecules of RAB8A can bind to one molecule of the effector protein; ternary complexes of RAB8A, RAB13 and either MICAL1 or EHBP1L1 are possible. Interacts with EHD1. Interacts with MAP4K2 and SYTL4. Interacts with SGSM1 and SGSM3. Interacts with RABIF, RIMS2, RPH3A and RPH3A. Interacts with OPTN. Interacts with RAB3IP, RAB3IP functions as guanine exchange factor (GEF). Interacts with MYO5B. Interacts with CIMAP3. Interacts with BIRC6/bruce. Interacts with OCRL. Interacts with AHI1. Interacts with DCDC1. Interacts with LRRK2; interaction facilitates phosphorylation of Thr-72. Interacts with RAB31P, GDI1, GDI2, CHM, CHML, RABGGTA, RABGGTB, TBC1D15 and INPP5B; these interactions are dependent on Thr-72 not being phosphorylated. Interacts with RILPL1 and RILPL2; these interactions are dependent on the phosphorylation of Thr-72 by LRRK2. Interacts with DZIP1; prevents inhibition by the GDP-dissociation inhibitor GDI2. Interacts (in GDP-bound form) with RAB3IP/Rabin8, RAB3IP functions as guanine exchange factor (GEF) towards RAB8A. Interacts (in GDP-bound form) with RPGR, RPGR functions as GEF towards RAB8A. It depends on Mg(2+) as a cofactor. Phosphorylation of Thr-72 in the switch II region by LRRK2 prevents the association of RAB regulatory proteins, including CHM, CHML and RAB GDP dissociation inhibitors GDI1 and GDI2. Phosphorylation by LRRK2 is required for localization to stressed lysosomes.

Its subcellular location is the cell membrane. The protein resides in the golgi apparatus. It is found in the endosome membrane. It localises to the recycling endosome membrane. The protein localises to the cell projection. Its subcellular location is the cilium. The protein resides in the cytoplasmic vesicle. It is found in the phagosome membrane. It localises to the cytoplasm. The protein localises to the cytoskeleton. Its subcellular location is the microtubule organizing center. The protein resides in the centrosome. It is found in the centriole. It localises to the cilium basal body. The protein localises to the midbody. Its subcellular location is the lysosome. The catalysed reaction is GTP + H2O = GDP + phosphate + H(+). With respect to regulation, regulated by guanine nucleotide exchange factors (GEFs) such as RAB3IP/Rabin8 and RPGR which promote the exchange of bound GDP for free GTP, GTPase activating proteins (GAPs) which increase the GTP hydrolysis activity, and GDP dissociation inhibitors (GDIs) which inhibit the dissociation of the nucleotide from the GTPase. Activated in response to insulin. The small GTPases Rab are key regulators of intracellular membrane trafficking, from the formation of transport vesicles to their fusion with membranes. Rabs cycle between an inactive GDP-bound form and an active GTP-bound form that is able to recruit to membranes different sets of downstream effectors directly responsible for vesicle formation, movement, tethering and fusion. RAB8A is involved in polarized vesicular trafficking and neurotransmitter release. Together with RAB11A, RAB3IP, the exocyst complex, PARD3, PRKCI, ANXA2, CDC42 and DNMBP promotes transcytosis of PODXL to the apical membrane initiation sites (AMIS), apical surface formation and lumenogenesis. Regulates the compacted morphology of the Golgi. Together with MYO5B and RAB11A participates in epithelial cell polarization. Also involved in membrane trafficking to the cilium and ciliogenesis. Together with MICALL2, may also regulate adherens junction assembly. May play a role in insulin-induced transport to the plasma membrane of the glucose transporter GLUT4 and therefore play a role in glucose homeostasis. Involved in autophagy. Participates in the export of a subset of neosynthesized proteins through a Rab8-Rab10-Rab11-dependent endososomal export route. Targeted to and stabilized on stressed lysosomes through LRRK2 phosphorylation. Suppresses stress-induced lysosomal enlargement through EHBP1 and EHNP1L1 effector proteins. This is Ras-related protein Rab-8A (RAB8A) from Canis lupus familiaris (Dog).